The sequence spans 136 residues: Classical arabinogalactan protein 11 (136 aa).

An N-terminal signal peptide occupies residues M1–A20. Low complexity-rich tracts occupy residues P24–P56, S68–V81, and P89–A107. Residues P24–T115 are disordered. A lipid anchor (GPI-anchor amidated serine) is attached at S112. Residues G113–L136 constitute a propeptide, removed in mature form.

It belongs to the classical AGP family. Post-translationally, O-glycosylated on the hydroxyproline residues.

It localises to the cell membrane. Proteoglycan that seems to be implicated in diverse developmental roles such as differentiation, cell-cell recognition, embryogenesis and programmed cell death. In Arabidopsis thaliana (Mouse-ear cress), this protein is Classical arabinogalactan protein 11 (AGP11).